Consider the following 1745-residue polypeptide: Collagen alpha-3(V) chain (1745 aa).

The first 29 residues, 1–29 (MGNRRDLGQPRAGLCLLLAALQLLPGTQA), serve as a signal peptide directing secretion. Residues 62-224 (DRAFRIGQAS…QACERYLPDC (163 aa)) form the Laminin G-like domain. N-linked (GlcNAc...) asparagine glycosylation is found at N102 and N141. Residues 211–391 (QAAFQACERY…AVIEKGQQFE (181 aa)) are nonhelical region. 4 disordered regions span residues 230–304 (AATV…TPTP), 322–362 (RSLD…EYPS), 387–439 (GQQF…RGPP), and 476–1492 (SMKG…PAEL). Residues 244-267 (PRRKGKGKGRKKGRGRKGKGRKKN) are compositionally biased toward basic residues. O-linked (Xyl...) (chondroitin sulfate) serine glycosylation occurs at S349. 2 Collagen-like domains span residues 391–440 (EGPP…GPPG) and 482–538 (GPVG…DGAR). The segment at 392–1489 (GPPGAPGPQG…AGPPGPPGAP (1098 aa)) is triple-helical region. The segment covering 406 to 424 (SGPPGPPGFPGDPGPPGPA) has biased composition (pro residues). Low complexity-rich tracts occupy residues 426 to 439 (LPGIPGIDGIRGPP), 489 to 499 (RPGPVGLPGHP), and 597 to 619 (EPGPRGLLGPRGSPGPTGRPGVT). The segment covering 724-733 (QGEKGEKGED) has biased composition (basic and acidic residues). A compositionally biased stretch (low complexity) spans 765 to 792 (PKGQAGQAGEEGPPGSAGEKGKLGVPGL). Collagen-like domains lie at 824–877 (GQPG…QGPP), 905–950 (GFQG…GLPG), and 951–989 (LEGREGAKGELGPPGPLGKEGPAGLRGFPGPKGGPGDPG). Low complexity predominate over residues 967–979 (LGKEGPAGLRGFP). Over residues 1016 to 1025 (GPAGGIGLPG) the composition is skewed to gly residues. Composition is skewed to low complexity over residues 1116–1126 (ADGAQGRRGPP) and 1141–1152 (VGVIGPPGLQGL). The segment covering 1190 to 1199 (GLPGGVGQPG) has biased composition (gly residues). Residues 1213–1222 (PGPPGAPGIP) are compositionally biased toward pro residues. Low complexity predominate over residues 1234 to 1243 (SGPSGAAGPP). A compositionally biased stretch (basic and acidic residues) spans 1318-1330 (MGREGREGEKGAK). Residues 1405–1416 (IGLIGLIGPPGE) are compositionally biased toward low complexity. Positions 1429 to 1443 (QGPPGPKGDPGPPGP) are enriched in pro residues. The region spanning 1430-1488 (GPPGPKGDPGPPGPIGSLGHPGPPGVAGPLGQKGSKGSPGSMGPRGDTGPAGPPGPPGA) is the Collagen-like 6 domain. Positions 1458-1479 (PLGQKGSKGSPGSMGPRGDTGP) are enriched in low complexity. A Fibrillar collagen NC1 domain is found at 1514-1744 (EEVLASLTSL…GFELGPVCFS (231 aa)). Intrachain disulfides connect C1585-C1742 and C1651-C1696.

It belongs to the fibrillar collagen family. As to quaternary structure, trimers of two alpha 1(V) and one alpha 2(V) chains in most tissues and trimers of one alpha 1(V), one alpha 2(V), and one alpha 3(V) chains in placenta. In terms of processing, prolines at the third position of the tripeptide repeating unit (G-X-Y) are hydroxylated in some or all of the chains. As to expression, detected in fibroblasts (at protein level). Detected in urine (at protein level).

It localises to the secreted. It is found in the extracellular space. Its subcellular location is the extracellular matrix. Type V collagen is a member of group I collagen (fibrillar forming collagen). It is a minor connective tissue component of nearly ubiquitous distribution. Type V collagen binds to DNA, heparan sulfate, thrombospondin, heparin, and insulin. The protein is Collagen alpha-3(V) chain (COL5A3) of Homo sapiens (Human).